The sequence spans 473 residues: Arginine biosynthesis bifunctional protein ArgJ, mitochondrial (473 aa).

Residues threonine 201, lysine 230, threonine 241, glutamate 328, asparagine 468, and threonine 473 each contribute to the substrate site. Threonine 241 acts as the Nucleophile in catalysis.

It belongs to the ArgJ family. In terms of assembly, heterodimer of an alpha and a beta chain. In terms of processing, the alpha and beta chains are autoproteolytically processed from a single precursor protein within the mitochondrion.

It localises to the mitochondrion matrix. It catalyses the reaction N(2)-acetyl-L-ornithine + L-glutamate = N-acetyl-L-glutamate + L-ornithine. The enzyme catalyses L-glutamate + acetyl-CoA = N-acetyl-L-glutamate + CoA + H(+). The protein operates within amino-acid biosynthesis; L-arginine biosynthesis; L-ornithine and N-acetyl-L-glutamate from L-glutamate and N(2)-acetyl-L-ornithine (cyclic): step 1/1. It functions in the pathway amino-acid biosynthesis; L-arginine biosynthesis; N(2)-acetyl-L-ornithine from L-glutamate: step 1/4. In terms of biological role, catalyzes two activities which are involved in the cyclic version of arginine biosynthesis: the synthesis of acetylglutamate from glutamate and acetyl-CoA, and of ornithine by transacetylation between acetylornithine and glutamate. This chain is Arginine biosynthesis bifunctional protein ArgJ, mitochondrial, found in Paracoccidioides lutzii (strain ATCC MYA-826 / Pb01) (Paracoccidioides brasiliensis).